A 594-amino-acid polypeptide reads, in one-letter code: uncharacterized protein (594 aa).

Residues 11–38 (CELCRRKKIRCNRELPSCQNCIVYQEEC) constitute a DNA-binding region (zn(2)-C6 fungal-type). The helical transmembrane segment at 503–523 (YLWVFLYCPFTPFLVLFSNIV) threads the bilayer.

It localises to the nucleus. The protein localises to the membrane. This is an uncharacterized protein from Schizosaccharomyces pombe (strain 972 / ATCC 24843) (Fission yeast).